A 24-amino-acid chain; its full sequence is Small ribosomal subunit protein uS19c (24 aa).

The protein belongs to the universal ribosomal protein uS19 family.

The protein resides in the plastid. It localises to the chloroplast. Its function is as follows. Protein S19 forms a complex with S13 that binds strongly to the 16S ribosomal RNA. The protein is Small ribosomal subunit protein uS19c (rps19) of Petunia hybrida (Petunia).